Consider the following 198-residue polypeptide: ATP-dependent Clp protease proteolytic subunit 2 (198 aa).

The active-site Nucleophile is serine 101. Histidine 126 is a catalytic residue.

It belongs to the peptidase S14 family. In terms of assembly, fourteen ClpP subunits assemble into 2 heptameric rings which stack back to back to give a disk-like structure with a central cavity, resembling the structure of eukaryotic proteasomes.

Its subcellular location is the cytoplasm. It catalyses the reaction Hydrolysis of proteins to small peptides in the presence of ATP and magnesium. alpha-casein is the usual test substrate. In the absence of ATP, only oligopeptides shorter than five residues are hydrolyzed (such as succinyl-Leu-Tyr-|-NHMec, and Leu-Tyr-Leu-|-Tyr-Trp, in which cleavage of the -Tyr-|-Leu- and -Tyr-|-Trp bonds also occurs).. Functionally, cleaves peptides in various proteins in a process that requires ATP hydrolysis. Has a chymotrypsin-like activity. Plays a major role in the degradation of misfolded proteins. In Thermosynechococcus vestitus (strain NIES-2133 / IAM M-273 / BP-1), this protein is ATP-dependent Clp protease proteolytic subunit 2.